We begin with the raw amino-acid sequence, 329 residues long: MIRNSDYNSFVCCAVCNKIIPPAPFGKTFKRIHEYKPLKTRFYTHKDILDIGANILKKEEKFQEDILRERIAKAEAEVWAQANERQKQAVEKALEEANDRHKIEIQILKEEHQKDLQEVTAKTKTEMYQNMDDEMKREHLAAEQRMVHRIQRIMMECHREKVEAVEKARAEERLIAQKAIQAQKSKATEEIVNTGITVTKDEKTSVARLMREKEHEMNVLYGIAQRQKQEEVQEVLQEAEKTHQATLGNVMDTLANTQGELLSIAKQLGIMTNWKDFLEEELQETRMAFQKYINYTFPKLSPGHADFILPERKKTPSNLVIEENKTTLD.

Coiled-coil stretches lie at residues 57–119 and 224–250; these read KKEE…LQEV and AQRQKQEEVQEVLQEAEKTHQATLGNV.

This is an uncharacterized protein from Macaca fascicularis (Crab-eating macaque).